We begin with the raw amino-acid sequence, 305 residues long: Putative ABC transporter molybdenum-binding protein HVO_B0369 (305 aa).

Residues 1–40 (MNPDSAAGRSSRRAFLAAVGGVAAGGLTATAGCLGRGEEA) constitute a signal peptide (tat-type signal).

The protein belongs to the bacterial solute-binding protein 1 family. WtpA subfamily. The complex is composed of two ATP-binding proteins, two transmembrane proteins (HVO_B0370) and a solute-binding protein (HVO_B0369). Post-translationally, predicted to be exported by the Tat system. The position of the signal peptide cleavage has not been experimentally proven.

Part of an ABC transporter complex involved in molybdenum import. In Haloferax volcanii (strain ATCC 29605 / DSM 3757 / JCM 8879 / NBRC 14742 / NCIMB 2012 / VKM B-1768 / DS2) (Halobacterium volcanii), this protein is Putative ABC transporter molybdenum-binding protein HVO_B0369.